The primary structure comprises 195 residues: dITP/XTP pyrophosphatase (195 aa).

Residue 8 to 13 (SNNQGK) coordinates substrate. Residues glutamate 39 and aspartate 68 each coordinate Mg(2+). Catalysis depends on aspartate 68, which acts as the Proton acceptor. Substrate contacts are provided by residues serine 69, 149-152 (FGYD), lysine 172, and 177-178 (HR).

The protein belongs to the HAM1 NTPase family. As to quaternary structure, homodimer. Mg(2+) serves as cofactor.

The enzyme catalyses XTP + H2O = XMP + diphosphate + H(+). The catalysed reaction is dITP + H2O = dIMP + diphosphate + H(+). It catalyses the reaction ITP + H2O = IMP + diphosphate + H(+). Pyrophosphatase that catalyzes the hydrolysis of nucleoside triphosphates to their monophosphate derivatives, with a high preference for the non-canonical purine nucleotides XTP (xanthosine triphosphate), dITP (deoxyinosine triphosphate) and ITP. Seems to function as a house-cleaning enzyme that removes non-canonical purine nucleotides from the nucleotide pool, thus preventing their incorporation into DNA/RNA and avoiding chromosomal lesions. The sequence is that of dITP/XTP pyrophosphatase from Staphylococcus aureus (strain MRSA252).